The primary structure comprises 369 residues: Spore membrane assembly protein 2 (369 aa).

The Cytoplasmic segment spans residues 1 to 6; it reads MLFPKR. Residues 7–27 form a helical membrane-spanning segment; that stretch reads LIVWGVLLILSLSQFVLYLPA. The Lumenal segment spans residues 28 to 220; the sequence is TTCTNSKGLR…NLAFILMMFN (193 aa). Residues 221-241 traverse the membrane as a helical segment; that stretch reads GMVFYFAVLEIIVGFLSICVV. The Cytoplasmic portion of the chain corresponds to 242–265; sequence SAFGGALSVGKRHRLFPMLLKSSS. A helical transmembrane segment spans residues 266 to 286; it reads SILVVIATLTILCNIVYLIAL. The Lumenal segment spans residues 287–319; the sequence is KTLEPEEVTDVGSDNAAVHTTGWELLKVNVGSG. A helical transmembrane segment spans residues 320–340; the sequence is FIMGLARYAIQWVLLVLAFLA. Residues 341-369 lie on the Cytoplasmic side of the membrane; that stretch reads ANHYKAKPKKSDKYTEDTSNSPSPDLMEK. The disordered stretch occupies residues 348 to 369; it reads PKKSDKYTEDTSNSPSPDLMEK.

Belongs to the SMA2 family.

It is found in the prospore membrane. The protein localises to the endoplasmic reticulum. Involved in spore and ascus formation. Required for the efficient assembly of the precursors of the prospore membrane to a continuous prospore membrane. The chain is Spore membrane assembly protein 2 (SMA2) from Saccharomyces cerevisiae (strain ATCC 204508 / S288c) (Baker's yeast).